A 631-amino-acid polypeptide reads, in one-letter code: 1-deoxy-D-xylulose-5-phosphate synthase (631 aa).

Thiamine diphosphate contacts are provided by residues histidine 87 and 128–130 (GHS). Aspartate 159 provides a ligand contact to Mg(2+). Thiamine diphosphate contacts are provided by residues 160-161 (GA), asparagine 188, phenylalanine 295, and glutamate 377. Mg(2+) is bound at residue asparagine 188.

Belongs to the transketolase family. DXPS subfamily. Homodimer. It depends on Mg(2+) as a cofactor. Requires thiamine diphosphate as cofactor.

The catalysed reaction is D-glyceraldehyde 3-phosphate + pyruvate + H(+) = 1-deoxy-D-xylulose 5-phosphate + CO2. It functions in the pathway metabolic intermediate biosynthesis; 1-deoxy-D-xylulose 5-phosphate biosynthesis; 1-deoxy-D-xylulose 5-phosphate from D-glyceraldehyde 3-phosphate and pyruvate: step 1/1. Functionally, catalyzes the acyloin condensation reaction between C atoms 2 and 3 of pyruvate and glyceraldehyde 3-phosphate to yield 1-deoxy-D-xylulose-5-phosphate (DXP). This chain is 1-deoxy-D-xylulose-5-phosphate synthase, found in Pseudomonas entomophila (strain L48).